Reading from the N-terminus, the 218-residue chain is Thiopurine S-methyltransferase (218 aa).

Positions 10, 45, 66, and 123 each coordinate S-adenosyl-L-methionine.

The protein belongs to the class I-like SAM-binding methyltransferase superfamily. TPMT family.

The protein resides in the cytoplasm. The enzyme catalyses S-adenosyl-L-methionine + a thiopurine = S-adenosyl-L-homocysteine + a thiopurine S-methylether.. This chain is Thiopurine S-methyltransferase, found in Shewanella denitrificans (strain OS217 / ATCC BAA-1090 / DSM 15013).